Reading from the N-terminus, the 967-residue chain is Leucine--tRNA ligase (967 aa).

A 'HIGH' region motif is present at residues 43-53 (PYLSGHLHVGH). The 'KMSKS' region motif lies at 650–654 (KMSKS). K653 serves as a coordination point for ATP.

It belongs to the class-I aminoacyl-tRNA synthetase family.

It is found in the cytoplasm. The catalysed reaction is tRNA(Leu) + L-leucine + ATP = L-leucyl-tRNA(Leu) + AMP + diphosphate. This chain is Leucine--tRNA ligase, found in Thermococcus kodakarensis (strain ATCC BAA-918 / JCM 12380 / KOD1) (Pyrococcus kodakaraensis (strain KOD1)).